The sequence spans 71 residues: Large ribosomal subunit protein bL31 (71 aa).

Zn(2+) contacts are provided by Cys-16, Cys-18, Cys-37, and Cys-40.

The protein belongs to the bacterial ribosomal protein bL31 family. Type A subfamily. Part of the 50S ribosomal subunit. Requires Zn(2+) as cofactor.

Binds the 23S rRNA. The protein is Large ribosomal subunit protein bL31 of Yersinia pseudotuberculosis serotype O:1b (strain IP 31758).